Here is a 129-residue protein sequence, read N- to C-terminus: uncharacterized protein (129 aa).

The helical transmembrane segment at 33 to 50 threads the bilayer; it reads MGGNVMWFIALLFALLIA.

The protein localises to the membrane. This is an uncharacterized protein from Saccharomyces cerevisiae (strain ATCC 204508 / S288c) (Baker's yeast).